Consider the following 393-residue polypeptide: PPE family protein PPE26 (393 aa).

This sequence belongs to the mycobacterial PPE family. As to quaternary structure, interacts with human TLR2.

Functionally, probably plays a key role in regulating innate and adaptive immune responses through human Toll-like receptor 2 (TLR2). Interacts with TLR2, leading to the subsequent activation of the mitogen-activated protein kinase (MAPK) and nuclear factor kappa B (NF-kappa-B) signaling pathways. Stimulates macrophage activation by augmenting pro-inflammatory cytokine production (TNF-alpha, IL-6 and IL-12p40) and the expression of cell surface molecules (CD80, CD86, MHC class I and II). Also participates in adaptive immunity by directing Th1-polarised immune responses. This is PPE family protein PPE26 from Mycobacterium tuberculosis (strain ATCC 25618 / H37Rv).